The sequence spans 471 residues: Cell division protein FtsP (471 aa).

The segment at residues 1–27 (MSLSRRSFLQASGVALAAGALPLKAEA) is a signal peptide (tat-type signal). Residues 229–288 (VRLRLLNASNARRYELSMTDNRAFHVVASDLGFLPAPMTVKRLSLGPGERREVLVDMSQG) form the Plastocyanin-like domain.

Belongs to the FtsP family. Post-translationally, predicted to be exported by the Tat system. The position of the signal peptide cleavage has not been experimentally proven.

The protein resides in the periplasm. Its function is as follows. Cell division protein that is required for growth during stress conditions. May be involved in protecting or stabilizing the divisomal assembly under conditions of stress. The chain is Cell division protein FtsP from Rahnella sp. (strain Y9602).